Reading from the N-terminus, the 850-residue chain is DNA polymerase I (850 aa).

The 288-residue stretch at 1 to 288 (MKLVIFDGNS…SIIKRLGLSE (288 aa)) folds into the 5'-3' exonuclease domain. Positions 470 to 850 (VDRDALIQYT…KEGLNWYETK (381 aa)) are polymerase.

It belongs to the DNA polymerase type-A family.

It catalyses the reaction DNA(n) + a 2'-deoxyribonucleoside 5'-triphosphate = DNA(n+1) + diphosphate. Its function is as follows. In addition to polymerase activity, this DNA polymerase exhibits 3'-5' and 5'-3' exonuclease activity. The chain is DNA polymerase I (polA) from Caldicellulosiruptor bescii (strain ATCC BAA-1888 / DSM 6725 / KCTC 15123 / Z-1320) (Anaerocellum thermophilum).